We begin with the raw amino-acid sequence, 207 residues long: LexA repressor (207 aa).

The segment at residues 28-48 is a DNA-binding region (H-T-H motif); the sequence is VREIGEAVGLASSSTVHGHLS. Catalysis depends on for autocatalytic cleavage activity residues serine 130 and lysine 168.

The protein belongs to the peptidase S24 family. Homodimer.

The enzyme catalyses Hydrolysis of Ala-|-Gly bond in repressor LexA.. Its function is as follows. Represses a number of genes involved in the response to DNA damage (SOS response), including recA and lexA. In the presence of single-stranded DNA, RecA interacts with LexA causing an autocatalytic cleavage which disrupts the DNA-binding part of LexA, leading to derepression of the SOS regulon and eventually DNA repair. The chain is LexA repressor from Staphylococcus carnosus (strain TM300).